The following is a 141-amino-acid chain: Relaxin-3 (141 aa).

The signal sequence occupies residues 1–24; that stretch reads MAMLGLLLLASWALLGALGLQAEA. 3 cysteine pairs are disulfide-bonded: Cys34–Cys128, Cys46–Cys141, and Cys127–Cys132. A propeptide spans 54-117 (connecting peptide); the sequence is ADILAHESLG…GSPGVVRGSR (64 aa).

The protein belongs to the insulin family. In terms of assembly, heterodimer of a B chain and an A chain linked by two disulfide bonds. As to expression, high expression in the brain localized to the pons/medulla with highest levels in pars ventromedialis of the dorsal tegmental nucleus. Significant expression is also detected in the spleen, thymus, lung, testis and ovary.

It localises to the secreted. May play a role in neuropeptide signaling processes. Ligand for LGR7, relaxin-3 receptor-1 and relaxin-3 receptor-2. The chain is Relaxin-3 (Rln3) from Mus musculus (Mouse).